Reading from the N-terminus, the 133-residue chain is Rodlin protein RdlB (133 aa).

The signal sequence occupies residues 1–28 (MIKKVVAYAAIAASVMGASAAAAPQAMA). Amyloid-forming stretches follow at residues 45-57 (QYFG…GNMS) and 59-70 (QMALIQGSFNKP). Residues 45–70 (QYFGNSMTTGNMSPQMALIQGSFNKP) are required for amyloid formation.

Belongs to the rodlin family.

It localises to the secreted. The protein localises to the cell wall. The protein resides in the spore wall. Forms part of the rodlet layer on the spore surface; despite their high similarity both RdlA and RdlB are required for rodlet formation. Plays a role in cell adhesion to polystyrene plates. Forms amyloid-like fibrils in vitro composed of stacked beta-sheets. This chain is Rodlin protein RdlB, found in Streptomyces coelicolor (strain ATCC BAA-471 / A3(2) / M145).